The primary structure comprises 791 residues: 1-phosphatidylinositol 4,5-bisphosphate phosphodiesterase delta-4 (791 aa).

One can recognise a PH domain in the interval 16 to 124 (LLMQKGTMMR…WMQGLQLLVG (109 aa)). Residues 26–53 (KVRSKSWKKLRFFRLQDDGMTVWHARQA) form a substrate binding region. EF-hand domains lie at 134–169 (RLDQWLSDWFQRGDKNQDGRMSFGEVQRLLHLMNVE), 170–205 (MDQEYAFQLFQTADTSQSGTLEGEEFVEFYKSLTQR), and 207–237 (EVQELFEKFSSDGQKLTLLEFVDFLQEEQKE). Residues Asp147, Asn149, Asp151, Arg153, Glu158, Asp183, Ser185, Ser187, Thr189, and Glu194 each contribute to the Ca(2+) site. The GBA signature appears at 213–243 (EKFSSDGQKLTLLEFVDFLQEEQKEGERASD). One can recognise a PI-PLC X-box domain in the interval 290–435 (QDMTQPLNHY…LRGKILVKGK (146 aa)). Residue His305 is part of the active site. The Ca(2+) site is built by Asn306, Glu335, and Asp337. His350 is a catalytic residue. A Ca(2+)-binding site is contributed by Glu384. Residues Lys433, Lys435, Ser551, and Arg578 each contribute to the substrate site. One can recognise a PI-PLC Y-box domain in the interval 522–638 (LSALVVYLKA…GYVLKPDFLR (117 aa)). A C2 domain is found at 638–765 (RDAQSSFHPE…QGYRHIHLLS (128 aa)). Residues Ile679, Asp681, Asn705, Asp734, Tyr735, and Asp736 each coordinate Ca(2+). The PDZ-binding signature appears at 760–763 (HIHL).

Interacts with GRIP1. Interacts (via GBA motif) with guanine nucleotide-binding protein G(i) alpha subunit GNAI3 (inactive GDP-bound form); low-affinity interaction. It depends on Ca(2+) as a cofactor.

It localises to the membrane. The protein resides in the nucleus. The protein localises to the cytoplasm. Its subcellular location is the endoplasmic reticulum. It catalyses the reaction a 1,2-diacyl-sn-glycero-3-phospho-(1D-myo-inositol-4,5-bisphosphate) + H2O = 1D-myo-inositol 1,4,5-trisphosphate + a 1,2-diacyl-sn-glycerol + H(+). The enzyme catalyses a 1,2-diacyl-sn-glycero-3-phospho-(1D-myo-inositol) + H2O = 1D-myo-inositol 1-phosphate + a 1,2-diacyl-sn-glycerol + H(+). Hydrolyzes the phosphatidylinositol 4,5-bisphosphate (PIP2) to generate 2 second messenger molecules diacylglycerol (DAG) and inositol 1,4,5-trisphosphate (IP3). DAG mediates the activation of protein kinase C (PKC), while IP3 releases Ca(2+) from intracellular stores. Required for acrosome reaction in sperm during fertilization, probably by acting as an important enzyme for intracellular Ca(2+) mobilization in the zona pellucida-induced acrosome reaction. May play a role in cell growth. Modulates the liver regeneration in cooperation with nuclear PKC. Overexpression up-regulates the Erk signaling pathway and proliferation. In Bos taurus (Bovine), this protein is 1-phosphatidylinositol 4,5-bisphosphate phosphodiesterase delta-4 (PLCD4).